The chain runs to 289 residues: 2-hydroxy-6-oxononadienedioate/2-hydroxy-6-oxononatrienedioate hydrolase (289 aa).

The 237-residue stretch at 39-275 (TVVMLHGSGP…RCGHWAQWEH (237 aa)) folds into the AB hydrolase-1 domain. H269 acts as the Proton acceptor in catalysis.

Belongs to the AB hydrolase superfamily. MhpC family. In terms of assembly, homodimer.

It catalyses the reaction (2Z,4E)-2-hydroxy-6-oxonona-2,4-dienedioate + H2O = (2Z)-2-hydroxypenta-2,4-dienoate + succinate + H(+). The enzyme catalyses (2Z,4E,7E)-2-hydroxy-6-oxonona-2,4,7-trienedioate + H2O = (2Z)-2-hydroxypenta-2,4-dienoate + fumarate + H(+). Its pathway is aromatic compound metabolism; 3-phenylpropanoate degradation. Catalyzes the cleavage of the C5-C6 bond of 2-hydroxy-6-oxononadienedioate and 2-hydroxy-6-oxononatrienedioate, a dienol ring fission product of the bacterial meta-cleavage pathway for degradation of phenylpropionic acid. This chain is 2-hydroxy-6-oxononadienedioate/2-hydroxy-6-oxononatrienedioate hydrolase, found in Paraburkholderia xenovorans (strain LB400).